The chain runs to 138 residues: Prefoldin subunit alpha (138 aa).

The protein belongs to the prefoldin subunit alpha family. Heterohexamer of two alpha and four beta subunits.

It is found in the cytoplasm. In terms of biological role, molecular chaperone capable of stabilizing a range of proteins. Seems to fulfill an ATP-independent, HSP70-like function in archaeal de novo protein folding. This is Prefoldin subunit alpha from Methanococcoides burtonii (strain DSM 6242 / NBRC 107633 / OCM 468 / ACE-M).